A 355-amino-acid polypeptide reads, in one-letter code: UDP-N-acetylglucosamine--N-acetylmuramyl-(pentapeptide) pyrophosphoryl-undecaprenol N-acetylglucosamine transferase (355 aa).

UDP-N-acetyl-alpha-D-glucosamine is bound by residues threonine 15 to glycine 17, asparagine 127, arginine 163, serine 191, isoleucine 244, alanine 263 to glutamate 268, and glutamine 288.

The protein belongs to the glycosyltransferase 28 family. MurG subfamily.

The protein localises to the cell inner membrane. The enzyme catalyses di-trans,octa-cis-undecaprenyl diphospho-N-acetyl-alpha-D-muramoyl-L-alanyl-D-glutamyl-meso-2,6-diaminopimeloyl-D-alanyl-D-alanine + UDP-N-acetyl-alpha-D-glucosamine = di-trans,octa-cis-undecaprenyl diphospho-[N-acetyl-alpha-D-glucosaminyl-(1-&gt;4)]-N-acetyl-alpha-D-muramoyl-L-alanyl-D-glutamyl-meso-2,6-diaminopimeloyl-D-alanyl-D-alanine + UDP + H(+). It participates in cell wall biogenesis; peptidoglycan biosynthesis. In terms of biological role, cell wall formation. Catalyzes the transfer of a GlcNAc subunit on undecaprenyl-pyrophosphoryl-MurNAc-pentapeptide (lipid intermediate I) to form undecaprenyl-pyrophosphoryl-MurNAc-(pentapeptide)GlcNAc (lipid intermediate II). The chain is UDP-N-acetylglucosamine--N-acetylmuramyl-(pentapeptide) pyrophosphoryl-undecaprenol N-acetylglucosamine transferase from Salmonella gallinarum (strain 287/91 / NCTC 13346).